Reading from the N-terminus, the 387-residue chain is S-adenosylmethionine synthase (387 aa).

His-19 lines the ATP pocket. Asp-21 contributes to the Mg(2+) binding site. Glu-47 lines the K(+) pocket. Gln-103 lines the L-methionine pocket. A flexible loop region spans residues Gln-103–Leu-113. ATP-binding positions include Asp-167 to Lys-169, Arg-233 to Phe-234, Asp-242, Arg-248 to Lys-249, Ala-265, and Lys-269. Asp-242 lines the L-methionine pocket. Lys-273 serves as a coordination point for L-methionine.

The protein belongs to the AdoMet synthase family. In terms of assembly, homotetramer; dimer of dimers. Requires Mg(2+) as cofactor. K(+) serves as cofactor.

The protein resides in the cytoplasm. It carries out the reaction L-methionine + ATP + H2O = S-adenosyl-L-methionine + phosphate + diphosphate. The protein operates within amino-acid biosynthesis; S-adenosyl-L-methionine biosynthesis; S-adenosyl-L-methionine from L-methionine: step 1/1. Functionally, catalyzes the formation of S-adenosylmethionine (AdoMet) from methionine and ATP. The overall synthetic reaction is composed of two sequential steps, AdoMet formation and the subsequent tripolyphosphate hydrolysis which occurs prior to release of AdoMet from the enzyme. This is S-adenosylmethionine synthase from Mycoplasma mycoides subsp. mycoides SC (strain CCUG 32753 / NCTC 10114 / PG1).